We begin with the raw amino-acid sequence, 234 residues long: MSILHATILTVFPEMFPGTLGHSLAGQALNKNIWSYDVINIRDFGLTKHKNIDDEAYGGGNGLIMRPDVLGSSIDHALALNPNAEMYYPSPRGRVFTQSFAKEMLKNKNLIFLCGRYEGIDERVIEEYNVKEISVGDYILSGGEMPTLTILDCLIRLLPGVLMNQNTLSSESFEEDGEFKGGLECSLYTRPEIWRDRAVPSVLLSGNHRLINEWKKEQSHMITKLRRPELLKDL.

Residues Gly-115 and 135–140 (VGDYIL) each bind S-adenosyl-L-methionine.

This sequence belongs to the RNA methyltransferase TrmD family. As to quaternary structure, homodimer.

It is found in the cytoplasm. It catalyses the reaction guanosine(37) in tRNA + S-adenosyl-L-methionine = N(1)-methylguanosine(37) in tRNA + S-adenosyl-L-homocysteine + H(+). Specifically methylates guanosine-37 in various tRNAs. This Rickettsia peacockii (strain Rustic) protein is tRNA (guanine-N(1)-)-methyltransferase.